The primary structure comprises 490 residues: GTPase Der (490 aa).

2 EngA-type G domains span residues 3–166 and 203–376; these read PVVA…MEDL and IKLA…DSST. GTP contacts are provided by residues 9 to 16, 56 to 60, 118 to 121, 209 to 216, 256 to 260, and 321 to 324; these read GRPNVGKS, DTGGI, NKID, DTAGV, and NKWD. In terms of domain architecture, KH-like spans 377 to 461; sequence RRVGTSMLTR…PIRIQFKEGE (85 aa).

This sequence belongs to the TRAFAC class TrmE-Era-EngA-EngB-Septin-like GTPase superfamily. EngA (Der) GTPase family. As to quaternary structure, associates with the 50S ribosomal subunit.

In terms of biological role, GTPase that plays an essential role in the late steps of ribosome biogenesis. This is GTPase Der from Shigella boydii serotype 18 (strain CDC 3083-94 / BS512).